A 207-amino-acid chain; its full sequence is Ras-related protein Rab-7a (207 aa).

N-acetylthreonine is present on Thr-2. GTP is bound by residues Ser-17, Gly-18, Val-19, Gly-20, Lys-21, Thr-22, Ser-23, Ser-34, Asn-35, Tyr-37, and Thr-40. Thr-22 is a Mg(2+) binding site. Positions 28–41 (YVNKKFSNQYKATI) match the Switch 1 motif. Thr-40 and Asp-63 together coordinate Mg(2+). GTP is bound at residue Gly-66. A Switch 2 motif is present at residues 67–82 (QERFQSLGVAFYRGAD). Position 72 is a phosphoserine (Ser-72). GTP is bound by residues Asn-125, Lys-126, Asp-128, Ala-156, and Lys-157. Residues Lys-191 and Lys-194 each participate in a glycyl lysine isopeptide (Lys-Gly) (interchain with G-Cter in ubiquitin) cross-link. S-geranylgeranyl cysteine attachment occurs at residues Cys-205 and Cys-207. At Cys-207 the chain carries Cysteine methyl ester.

The protein belongs to the small GTPase superfamily. Rab family. Interacts with NTRK1/TRKA. Interacts with RILP. Interacts with PSMA7. Interacts with RNF115. Interacts with FYCO1. Interacts with the PIK3C3/VPS34-PIK3R4 complex. The GTP-bound form interacts with OSBPL1A. The GTP-bound form interacts with RAC1. Interacts with CLN3. Interacts with CHM, the substrate-binding subunit of the Rab geranylgeranyltransferase complex. Interacts with C9orf72. Does not interact with HPS4 and the BLOC-3 complex (heterodimer of HPS1 and HPS4). Interacts with CLN5. Interacts with PLEKHM1 (via N- and C-terminus). Interacts with PRPH; the interaction is direct. Interacts with VPS13A. The GDP-bound form interacts with RIMOC1. Interacts with the MON1A-CCZ1B complex and this interaction is enhanced in the presence of RIMOC1. Interacts with VPS39 and VPS41. Forms a ternary complex with LAMP2 and RUFY4; the interaction with LAMP2 is mediated by RUFY4 (via RUN and coiled coil domains). Mg(2+) is required as a cofactor. Post-translationally, deubiquitination at Lys-191 and Lys-194 by USP32. In terms of processing, phosphorylated at Ser-72 by LRRK1; phosphorylation is dependent on protein kinase C (PKC) activation of LRRK1. Prenylated. Prenylation is required for association with cellular membranes.

The protein resides in the cytoplasmic vesicle. It localises to the phagosome membrane. Its subcellular location is the late endosome membrane. The protein localises to the lysosome membrane. It is found in the melanosome membrane. The protein resides in the autophagosome membrane. It localises to the lipid droplet. Its subcellular location is the endosome membrane. The protein localises to the mitochondrion membrane. The enzyme catalyses GTP + H2O = GDP + phosphate + H(+). Regulated by guanine nucleotide exchange factors (GEFs) which promote the exchange of bound GDP for free GTP. Regulated by GTPase activating proteins (GAPs) which increase the GTP hydrolysis activity. Inhibited by GDP dissociation inhibitors (GDIs). The small GTPases Rab are key regulators of intracellular membrane trafficking, from the formation of transport vesicles to their fusion with membranes. Rabs cycle between an inactive GDP-bound form and an active GTP-bound form that is able to recruit to membranes different sets of downstream effectors directly responsible for vesicle formation, movement, tethering and fusion. In its active state, RAB7A binds to a variety of effector proteins playing a key role in the regulation of endo-lysosomal trafficking. Governs early-to-late endosomal maturation, microtubule minus-end as well as plus-end directed endosomal migration and positioning, and endosome-lysosome transport through different protein-protein interaction cascades. Also plays a central role in growth-factor-mediated cell signaling, nutrient-transporter-mediated nutrient uptake, neurotrophin transport in the axons of neurons and lipid metabolism. Also involved in regulation of some specialized endosomal membrane trafficking, such as maturation of melanosomes, pathogen-induced phagosomes (or vacuoles) and autophagosomes. Plays a role in the maturation and acidification of phagosomes that engulf pathogens, such as S.aureus and Mycobacteria. Plays a role in the fusion of phagosomes with lysosomes. In concert with RAC1, plays a role in regulating the formation of RBs (ruffled borders) in osteoclasts. Controls the endosomal trafficking and neurite outgrowth signaling of NTRK1/TRKA. Regulates the endocytic trafficking of the EGF-EGFR complex by regulating its lysosomal degradation. Involved in the ADRB2-stimulated lipolysis through lipophagy, a cytosolic lipase-independent autophagic pathway. Required for the exosomal release of SDCBP, CD63 and syndecan. Required for vesicular trafficking and cell surface expression of ACE2. May play a role in PRPH neuronal intermediate filament assembly. In Pongo abelii (Sumatran orangutan), this protein is Ras-related protein Rab-7a (RAB7A).